The chain runs to 439 residues: Adenylosuccinate synthetase (439 aa).

Residues 14-20 and 42-44 contribute to the GTP site; these read GDEGKGK and GHT. Asp15 (proton acceptor) is an active-site residue. The Mg(2+) site is built by Asp15 and Gly42. Residues 15–18, 40–43, Thr130, Arg144, Gln225, Thr240, and Arg304 each bind IMP; these read DEGK and NAGH. The active-site Proton donor is the His43. 300–306 contributes to the substrate binding site; the sequence is TTTGRRR. Residues Arg306, 332-334, and 414-416 contribute to the GTP site; these read KLD and SLG.

The protein belongs to the adenylosuccinate synthetase family. In terms of assembly, homodimer. Mg(2+) is required as a cofactor.

It is found in the cytoplasm. It carries out the reaction IMP + L-aspartate + GTP = N(6)-(1,2-dicarboxyethyl)-AMP + GDP + phosphate + 2 H(+). The protein operates within purine metabolism; AMP biosynthesis via de novo pathway; AMP from IMP: step 1/2. Functionally, plays an important role in the de novo pathway of purine nucleotide biosynthesis. Catalyzes the first committed step in the biosynthesis of AMP from IMP. The sequence is that of Adenylosuccinate synthetase from Prochlorococcus marinus (strain MIT 9303).